We begin with the raw amino-acid sequence, 166 residues long: Large ribosomal subunit protein uL10 (166 aa).

It belongs to the universal ribosomal protein uL10 family. As to quaternary structure, part of the ribosomal stalk of the 50S ribosomal subunit. The N-terminus interacts with L11 and the large rRNA to form the base of the stalk. The C-terminus forms an elongated spine to which L12 dimers bind in a sequential fashion forming a multimeric L10(L12)X complex.

Functionally, forms part of the ribosomal stalk, playing a central role in the interaction of the ribosome with GTP-bound translation factors. In Streptococcus gordonii (strain Challis / ATCC 35105 / BCRC 15272 / CH1 / DL1 / V288), this protein is Large ribosomal subunit protein uL10.